The following is a 437-amino-acid chain: Glutamate-1-semialdehyde 2,1-aminomutase (437 aa).

The residue at position 274 (Lys274) is an N6-(pyridoxal phosphate)lysine.

Belongs to the class-III pyridoxal-phosphate-dependent aminotransferase family. HemL subfamily. As to quaternary structure, homodimer. It depends on pyridoxal 5'-phosphate as a cofactor.

The protein resides in the cytoplasm. The catalysed reaction is (S)-4-amino-5-oxopentanoate = 5-aminolevulinate. It functions in the pathway porphyrin-containing compound metabolism; protoporphyrin-IX biosynthesis; 5-aminolevulinate from L-glutamyl-tRNA(Glu): step 2/2. The polypeptide is Glutamate-1-semialdehyde 2,1-aminomutase (Paracidovorax citrulli (strain AAC00-1) (Acidovorax citrulli)).